Here is a 352-residue protein sequence, read N- to C-terminus: Photosystem II D2 protein (352 aa).

At 1-31 (MTIAVGRAPVERGWFDVLDDWLKRDRFVFIG) the chain is on the cytoplasmic side. A helical transmembrane segment spans residues 32-53 (WSGLLLFPCAFMALGGWLTGTT). At 54–108 (FVTSWYTHGLASSYLEGANFLTVAVSSPADAFGHSLLFLWGPEAQGNLTRWFQIG) the chain is on the lumenal, thylakoid side. The chain crosses the membrane as a helical span at residues 109-131 (GLWPFVALHGAFGLIGFMLRQFE). H117 is a binding site for chlorophyll a. Q129 contacts pheophytin a. Residues 132 to 140 (ISRLVGIRP) are Cytoplasmic-facing. Residues 141 to 162 (YNAIAFSGPIAVFVSVFLMYPL) traverse the membrane as a helical segment. N142 is a binding site for pheophytin a. The Lumenal, thylakoid portion of the chain corresponds to 163–190 (GQSSWFFAPSFGVAGIFRFILFLQGFHN). Residues 191–217 (WTLNPFHMMGVAGILGGALLCAIHGAT) traverse the membrane as a helical segment. H197 is a chlorophyll a binding site. H214 and F261 together coordinate a plastoquinone. H214 serves as a coordination point for Fe cation. The Cytoplasmic segment spans residues 218-265 (VENTLFEDGEDSNTFRAFEPTQAEETYSMVTANRFWSQIFGIAFSNKR). A helical membrane pass occupies residues 266–288 (WLHFFMLFVPVTGLWMSSVGIVG). H268 provides a ligand contact to Fe cation. Topologically, residues 289-352 (LALNLRAYDF…EEVLPRGNAL (64 aa)) are lumenal, thylakoid.

Belongs to the reaction center PufL/M/PsbA/D family. As to quaternary structure, PSII is composed of 1 copy each of membrane proteins PsbA, PsbB, PsbC, PsbD, PsbE, PsbF, PsbH, PsbI, PsbJ, PsbK, PsbL, PsbM, PsbT, PsbX, PsbY, PsbZ, Psb30/Ycf12, peripheral proteins PsbO, CyanoQ (PsbQ), PsbU, PsbV and a large number of cofactors. It forms dimeric complexes. The D1/D2 heterodimer binds P680, chlorophylls that are the primary electron donor of PSII, and subsequent electron acceptors. It shares a non-heme iron and each subunit binds pheophytin, quinone, additional chlorophylls, carotenoids and lipids. There is also a Cl(-1) ion associated with D1 and D2, which is required for oxygen evolution. The PSII complex binds additional chlorophylls, carotenoids and specific lipids. is required as a cofactor.

It localises to the cellular thylakoid membrane. It catalyses the reaction 2 a plastoquinone + 4 hnu + 2 H2O = 2 a plastoquinol + O2. Photosystem II (PSII) is a light-driven water:plastoquinone oxidoreductase that uses light energy to abstract electrons from H(2)O, generating O(2) and a proton gradient subsequently used for ATP formation. It consists of a core antenna complex that captures photons, and an electron transfer chain that converts photonic excitation into a charge separation. The D1/D2 (PsbA/PsbD) reaction center heterodimer binds P680, the primary electron donor of PSII as well as several subsequent electron acceptors. D2 is needed for assembly of a stable PSII complex. The protein is Photosystem II D2 protein of Synechocystis sp. (strain ATCC 27184 / PCC 6803 / Kazusa).